Here is a 76-residue protein sequence, read N- to C-terminus: Protein RALF-like 30 (76 aa).

An N-terminal signal peptide occupies residues 1–22 (MKAWVICLMVISIFMMIEPTLA). 2 disulfide bridges follow: Cys-37–Cys-46 and Cys-66–Cys-72.

It belongs to the plant rapid alkalinization factor (RALF) family.

It localises to the secreted. Its function is as follows. Cell signaling peptide that may regulate plant stress, growth, and development. Mediates a rapid alkalinization of extracellular space by mediating a transient increase in the cytoplasmic Ca(2+) concentration leading to a calcium-dependent signaling events through a cell surface receptor and a concomitant activation of some intracellular mitogen-activated protein kinases. The polypeptide is Protein RALF-like 30 (RALFL30) (Arabidopsis thaliana (Mouse-ear cress)).